A 677-amino-acid polypeptide reads, in one-letter code: Amine oxidase [copper-containing] alpha 2, peroxisomal (677 aa).

Position 320–331 (Tyr320–Thr331) interacts with substrate. The active-site Proton acceptor is Asp322. Cys341 and Cys367 are disulfide-bonded. Val407–Tyr412 contacts substrate. The active-site Schiff-base intermediate with substrate; via topaquinone is the Tyr410. Tyr410 carries the 2',4',5'-topaquinone modification. 2 residues coordinate Cu cation: His466 and His468. Positions 477, 617, and 618 each coordinate Mn(2+). A Cu cation-binding site is contributed by His628.

Belongs to the copper/topaquinone oxidase family. Homodimer. Cu cation serves as cofactor. Zn(2+) is required as a cofactor. Requires L-topaquinone as cofactor. Post-translationally, topaquinone (TPQ) is generated by copper-dependent autoxidation of a specific tyrosyl residue. As to expression, expressed exclusively in leaves.

Its subcellular location is the peroxisome. The catalysed reaction is a primary methyl amine + O2 + H2O = an aldehyde + H2O2 + NH4(+). The protein operates within amine and polyamine degradation; putrescine degradation. Its function is as follows. Copper amine oxidase that can use putrescine and spermidine as substrates. Involved in putrescine catabolism in peroxisomes in response to salt stress. Regulates arginine-dependent nitric oxide (NO) production, a key signaling molecule regulating a wide range of physiological processes including responses to salt stress, by influencing arginine bioavailability. Modulates primary root growth. This Arabidopsis thaliana (Mouse-ear cress) protein is Amine oxidase [copper-containing] alpha 2, peroxisomal.